A 272-amino-acid chain; its full sequence is D-aminoacyl-tRNA deacylase (272 aa).

The protein belongs to the DtdA deacylase family. As to quaternary structure, monomer. The cofactor is Zn(2+).

The enzyme catalyses a D-aminoacyl-tRNA + H2O = a tRNA + a D-alpha-amino acid + H(+). It carries out the reaction glycyl-tRNA(Ala) + H2O = tRNA(Ala) + glycine + H(+). In terms of biological role, D-aminoacyl-tRNA deacylase with broad substrate specificity. By recycling D-aminoacyl-tRNA to D-amino acids and free tRNA molecules, this enzyme counteracts the toxicity associated with the formation of D-aminoacyl-tRNA entities in vivo. This is D-aminoacyl-tRNA deacylase from Thermococcus onnurineus (strain NA1).